The following is a 577-amino-acid chain: Arginine--tRNA ligase (577 aa).

The 'HIGH' region motif lies at 122–132; that stretch reads PNVAKEMHVGH.

Belongs to the class-I aminoacyl-tRNA synthetase family. In terms of assembly, monomer.

Its subcellular location is the cytoplasm. It catalyses the reaction tRNA(Arg) + L-arginine + ATP = L-arginyl-tRNA(Arg) + AMP + diphosphate. The polypeptide is Arginine--tRNA ligase (Salmonella newport (strain SL254)).